The following is a 308-amino-acid chain: Very-long-chain enoyl-CoA reductase (308 aa).

Over 1–86 (MKHYEVEIRD…YFRDLGAQIS (86 aa)) the chain is Cytoplasmic. K22 carries the N6-acetyllysine modification. S58 carries the post-translational modification Phosphoserine. K60 carries the N6-acetyllysine modification. A helical membrane pass occupies residues 87-106 (WVTVFLTEYAGPLFIYLLFY). Residues 107–124 (FRVPFIYGRKYDFTSSRH) lie on the Lumenal side of the membrane. A helical transmembrane segment spans residues 125–147 (TVVHLACMCHSFHYIKRLLETLF). The Cytoplasmic segment spans residues 148–158 (VHRFSHGTMPL). The chain crosses the membrane as a helical span at residues 159 to 180 (RNIFKNCTYYWGFAAWMAYYIN). Residues 181–189 (HPLYTPPTY) are Lumenal-facing. Residues 190–216 (GVQQVKLALAIFVICQLGNFSIHMALR) traverse the membrane as a helical segment. Topologically, residues 217-245 (DLRPAGSKTRKIPYPTKNPFTWLFLLVSC) are cytoplasmic. The helical transmembrane segment at 246 to 262 (PNYTYEVGSWIGFAIMT) threads the bilayer. Topologically, residues 263–264 (QC) are lumenal. The chain crosses the membrane as a helical span at residues 265 to 292 (VPVALFSLVGFTQMTIWAKGKHRSYLKE). Residues 293-308 (FRDYPPLRMPIIPFLL) are Cytoplasmic-facing.

Belongs to the steroid 5-alpha reductase family. Interacts with ELOVL1 and LASS2. Post-translationally, glycosylated. As to expression, expressed at high levels in brain and is also found at lower levels in several other tissues.

Its subcellular location is the endoplasmic reticulum membrane. The enzyme catalyses a very-long-chain 2,3-saturated fatty acyl-CoA + NADP(+) = a very-long-chain (2E)-enoyl-CoA + NADPH + H(+). It catalyses the reaction octadecanoyl-CoA + NADP(+) = (2E)-octadecenoyl-CoA + NADPH + H(+). The catalysed reaction is (2E,7Z,10Z,13Z,16Z)-docosapentaenoyl-CoA + NADPH + H(+) = (7Z,10Z,13Z,16Z)-docosatetraenoyl-CoA + NADP(+). It carries out the reaction (2E,7Z,10Z,13Z,16Z,19Z)-docosahexaenoyl-CoA + NADPH + H(+) = (7Z,10Z,13Z,16Z,19Z)-docosapentaenoyl-CoA + NADP(+). The enzyme catalyses (2E,8Z,11Z,14Z)-eicosatetraenoyl-CoA + NADPH + H(+) = (8Z,11Z,14Z)-eicosatrienoyl-CoA + NADP(+). It catalyses the reaction (2E)-hexadecenoyl-CoA + NADPH + H(+) = hexadecanoyl-CoA + NADP(+). Its pathway is lipid metabolism; fatty acid biosynthesis. It participates in lipid metabolism; sphingolipid metabolism. In terms of biological role, involved in both the production of very long-chain fatty acids for sphingolipid synthesis and the degradation of the sphingosine moiety in sphingolipids through the sphingosine 1-phosphate metabolic pathway. Catalyzes the last of the four reactions of the long-chain fatty acids elongation cycle. This endoplasmic reticulum-bound enzymatic process, allows the addition of 2 carbons to the chain of long- and very long-chain fatty acids/VLCFAs per cycle. This enzyme reduces the trans-2,3-enoyl-CoA fatty acid intermediate to an acyl-CoA that can be further elongated by entering a new cycle of elongation. Thereby, it participates in the production of VLCFAs of different chain lengths that are involved in multiple biological processes as precursors of membrane lipids and lipid mediators. Catalyzes the saturation step of the sphingosine 1-phosphate metabolic pathway, the conversion of trans-2-hexadecenoyl-CoA to palmitoyl-CoA. This Rattus norvegicus (Rat) protein is Very-long-chain enoyl-CoA reductase (Tecr).